The following is a 340-amino-acid chain: Heat-inducible transcription repressor HrcA (340 aa).

This sequence belongs to the HrcA family.

Functionally, negative regulator of class I heat shock genes (grpE-dnaK-dnaJ and groELS operons). Prevents heat-shock induction of these operons. This is Heat-inducible transcription repressor HrcA from Burkholderia cenocepacia (strain HI2424).